A 133-amino-acid chain; its full sequence is Small ribosomal subunit protein uS8 (133 aa).

The protein belongs to the universal ribosomal protein uS8 family. As to quaternary structure, part of the 30S ribosomal subunit. Contacts proteins S5 and S12.

Functionally, one of the primary rRNA binding proteins, it binds directly to 16S rRNA central domain where it helps coordinate assembly of the platform of the 30S subunit. This chain is Small ribosomal subunit protein uS8, found in Leptospira interrogans serogroup Icterohaemorrhagiae serovar copenhageni (strain Fiocruz L1-130).